Reading from the N-terminus, the 403-residue chain is Leu/Ile/Val-binding protein homolog 8 (403 aa).

The N-terminal stretch at 1 to 26 is a signal peptide; that stretch reads MRLSRLLIGASLGVALSSTVFTAALA.

This sequence belongs to the leucine-binding protein family.

Component of an amino-acid transport system. The protein is Leu/Ile/Val-binding protein homolog 8 of Brucella melitensis biotype 1 (strain ATCC 23456 / CCUG 17765 / NCTC 10094 / 16M).